Here is a 155-residue protein sequence, read N- to C-terminus: UPF0178 protein Gmet_1725 (155 aa).

It belongs to the UPF0178 family.

The polypeptide is UPF0178 protein Gmet_1725 (Geobacter metallireducens (strain ATCC 53774 / DSM 7210 / GS-15)).